The primary structure comprises 316 residues: Bifunctional protein FolD (316 aa).

NADP(+) contacts are provided by residues glycine 165–serine 167 and isoleucine 231.

It belongs to the tetrahydrofolate dehydrogenase/cyclohydrolase family. As to quaternary structure, homodimer.

The enzyme catalyses (6R)-5,10-methylene-5,6,7,8-tetrahydrofolate + NADP(+) = (6R)-5,10-methenyltetrahydrofolate + NADPH. It carries out the reaction (6R)-5,10-methenyltetrahydrofolate + H2O = (6R)-10-formyltetrahydrofolate + H(+). Its pathway is one-carbon metabolism; tetrahydrofolate interconversion. Functionally, catalyzes the oxidation of 5,10-methylenetetrahydrofolate to 5,10-methenyltetrahydrofolate and then the hydrolysis of 5,10-methenyltetrahydrofolate to 10-formyltetrahydrofolate. This Sphingobium chlorophenolicum protein is Bifunctional protein FolD.